Consider the following 164-residue polypeptide: UPF0304 protein NT01EI_2691 (164 aa).

It belongs to the UPF0304 family.

This Edwardsiella ictaluri (strain 93-146) protein is UPF0304 protein NT01EI_2691.